The primary structure comprises 160 residues: Succinate dehydrogenase assembly factor 2-A, mitochondrial (160 aa).

The transit peptide at 1 to 30 (MLRQLKLTLNISRWIFMPWQRQASASSSQV) directs the protein to the mitochondrion.

This sequence belongs to the SDHAF2 family. Interacts with the flavoprotein subunit within the SDH catalytic dimer.

The protein localises to the mitochondrion matrix. Its function is as follows. Plays an essential role in the assembly of succinate dehydrogenase (SDH), an enzyme complex (also referred to as respiratory complex II) that is a component of both the tricarboxylic acid (TCA) cycle and the mitochondrial electron transport chain, and which couples the oxidation of succinate to fumarate with the reduction of ubiquinone (coenzyme Q) to ubiquinol. Required for flavinylation (covalent attachment of FAD) of the flavoprotein subunit of the SDH catalytic dimer. The protein is Succinate dehydrogenase assembly factor 2-A, mitochondrial of Drosophila persimilis (Fruit fly).